Consider the following 492-residue polypeptide: uncharacterized protein (492 aa).

Transmembrane regions (helical) follow at residues 13–33 (LGFI…WRFG), 42–62 (GAFL…LMIL), 97–117 (FIIT…LIIL), 150–170 (GILV…SAGI), 180–200 (IMIP…LTLP), 222–242 (VWLS…GILI), 258–278 (AVTV…AVFG), 320–340 (FGIV…VSIV), 359–379 (LLAV…GAGL), 391–411 (GYLL…LFGG), 428–448 (VWWK…VVFL), and 463–483 (TTYV…SVIL).

It belongs to the sodium:neurotransmitter symporter (SNF) (TC 2.A.22) family.

Its subcellular location is the cell membrane. Functionally, putative sodium-dependent transporter. This is an uncharacterized protein from Methanocaldococcus jannaschii (strain ATCC 43067 / DSM 2661 / JAL-1 / JCM 10045 / NBRC 100440) (Methanococcus jannaschii).